A 295-amino-acid polypeptide reads, in one-letter code: Putative F-box protein At5g44220 (295 aa).

One can recognise an F-box domain in the interval S56–F102.

The chain is Putative F-box protein At5g44220 from Arabidopsis thaliana (Mouse-ear cress).